The following is a 320-amino-acid chain: o-succinylbenzoate synthase (320 aa).

The Proton donor role is filled by Lys133. Positions 161, 190, and 213 each coordinate Mg(2+). The Proton acceptor role is filled by Lys235.

This sequence belongs to the mandelate racemase/muconate lactonizing enzyme family. MenC type 1 subfamily. A divalent metal cation serves as cofactor.

The catalysed reaction is (1R,6R)-6-hydroxy-2-succinyl-cyclohexa-2,4-diene-1-carboxylate = 2-succinylbenzoate + H2O. Its pathway is quinol/quinone metabolism; 1,4-dihydroxy-2-naphthoate biosynthesis; 1,4-dihydroxy-2-naphthoate from chorismate: step 4/7. It functions in the pathway quinol/quinone metabolism; menaquinone biosynthesis. In terms of biological role, converts 2-succinyl-6-hydroxy-2,4-cyclohexadiene-1-carboxylate (SHCHC) to 2-succinylbenzoate (OSB). The protein is o-succinylbenzoate synthase of Escherichia coli (strain K12 / MC4100 / BW2952).